A 418-amino-acid polypeptide reads, in one-letter code: uncharacterized protein (418 aa).

Disordered regions lie at residues 123-174, 209-231, 258-302, and 344-418; these read KVKD…DSDK, FDKE…EKEE, KDDN…DEEL, and KDAD…YFKK. The segment covering 136 to 154 has biased composition (basic and acidic residues); it reads NKKDKKDKNKQNEEDHLII. The span at 156 to 170 shows a compositional bias: acidic residues; that stretch reads DVIDEEIQEKEDNES. A compositionally biased stretch (basic and acidic residues) spans 209–227; that stretch reads FDKEEKEREKEKEKEKEKE. Over residues 266–293 the composition is skewed to low complexity; it reads NQNQNQNQNNNNNNNNNNNNNNNNNNNN. Over residues 344–356 the composition is skewed to acidic residues; that stretch reads KDADDSDDFDEFN. The segment covering 359–374 has biased composition (polar residues); it reads DTESQLSKSKQKSPNV. The span at 375 to 390 shows a compositional bias: low complexity; that stretch reads KKTTTTTTTSTSTSSR. The span at 391-401 shows a compositional bias: basic residues; sequence KQSKSKLKPKS.

This is an uncharacterized protein from Dictyostelium discoideum (Social amoeba).